The chain runs to 154 residues: Secreted RxLR effector protein PITG_21681 (154 aa).

The N-terminal stretch at 1–20 (MRRYAALMVIDAVLLSTSQA) is a signal peptide. Residues 42–70 (SAERDGGIPNKRSLRRISVTESNDGERDE) form a disordered region. A RxLR-dEER motif is present at residues 53–72 (RSLRRISVTESNDGERDEER).

It belongs to the RxLR effector family.

It is found in the secreted. The protein localises to the host cell. Secreted effector that is involved in host plant infection. Increases the susceptibility to P.infestans and reduces the plant growth. Affects the expression of host genes. The protein is Secreted RxLR effector protein PITG_21681 of Phytophthora infestans (strain T30-4) (Potato late blight agent).